The primary structure comprises 732 residues: Polyphosphate kinase (732 aa).

An ATP-binding site is contributed by Asn61. Mg(2+) contacts are provided by Arg417 and Arg447. Catalysis depends on His477, which acts as the Phosphohistidine intermediate. The ATP site is built by Tyr510, Arg606, and His634. The segment at 699–718 (DGTYRQRQPAPGEAERGTHS) is disordered.

It belongs to the polyphosphate kinase 1 (PPK1) family. It depends on Mg(2+) as a cofactor. Post-translationally, an intermediate of this reaction is the autophosphorylated ppk in which a phosphate is covalently linked to a histidine residue through a N-P bond.

The enzyme catalyses [phosphate](n) + ATP = [phosphate](n+1) + ADP. Functionally, catalyzes the reversible transfer of the terminal phosphate of ATP to form a long-chain polyphosphate (polyP). In Thermosynechococcus vestitus (strain NIES-2133 / IAM M-273 / BP-1), this protein is Polyphosphate kinase.